A 381-amino-acid chain; its full sequence is Succinyl-diaminopimelate desuccinylase (381 aa).

His-72 lines the Zn(2+) pocket. The active site involves Asp-74. Asp-105 provides a ligand contact to Zn(2+). The active-site Proton acceptor is the Glu-139. Residues Glu-140, Glu-168, and His-354 each contribute to the Zn(2+) site.

This sequence belongs to the peptidase M20A family. DapE subfamily. In terms of assembly, homodimer. Zn(2+) is required as a cofactor. It depends on Co(2+) as a cofactor.

The enzyme catalyses N-succinyl-(2S,6S)-2,6-diaminopimelate + H2O = (2S,6S)-2,6-diaminopimelate + succinate. It functions in the pathway amino-acid biosynthesis; L-lysine biosynthesis via DAP pathway; LL-2,6-diaminopimelate from (S)-tetrahydrodipicolinate (succinylase route): step 3/3. In terms of biological role, catalyzes the hydrolysis of N-succinyl-L,L-diaminopimelic acid (SDAP), forming succinate and LL-2,6-diaminopimelate (DAP), an intermediate involved in the bacterial biosynthesis of lysine and meso-diaminopimelic acid, an essential component of bacterial cell walls. The sequence is that of Succinyl-diaminopimelate desuccinylase from Shewanella sp. (strain MR-7).